The primary structure comprises 307 residues: Elongation factor Ts (307 aa).

The segment at 80-83 is involved in Mg(2+) ion dislocation from EF-Tu; that stretch reads TDFV.

This sequence belongs to the EF-Ts family.

It localises to the cytoplasm. In terms of biological role, associates with the EF-Tu.GDP complex and induces the exchange of GDP to GTP. It remains bound to the aminoacyl-tRNA.EF-Tu.GTP complex up to the GTP hydrolysis stage on the ribosome. In Rhodopseudomonas palustris (strain BisA53), this protein is Elongation factor Ts.